Reading from the N-terminus, the 622-residue chain is Glucose 1,6-bisphosphate synthase (622 aa).

Alpha-D-glucose 1,6-bisphosphate is bound by residues Arg73 and Ser175. The Phosphoserine intermediate role is filled by Ser175. Mg(2+) contacts are provided by Ser175, Asp332, and Asp334. Position 175 is a phosphoserine (Ser175). Asp336, Arg337, Glu434, Ser436, and Lys448 together coordinate alpha-D-glucose 1,6-bisphosphate.

Belongs to the phosphohexose mutase family.

The protein resides in the cytoplasm. It localises to the cytosol. The enzyme catalyses (2R)-3-phospho-glyceroyl phosphate + alpha-D-glucose 1-phosphate = alpha-D-glucose 1,6-bisphosphate + (2R)-3-phosphoglycerate + H(+). It catalyses the reaction alpha-D-glucose 6-phosphate + (2R)-3-phospho-glyceroyl phosphate = alpha-D-glucose 1,6-bisphosphate + (2R)-3-phosphoglycerate + H(+). It carries out the reaction (2R)-3-phospho-glyceroyl phosphate + alpha-D-ribose 1-phosphate = alpha-D-ribose 1,5-bisphosphate + (2R)-3-phosphoglycerate + H(+). The catalysed reaction is 2-deoxy-alpha-D-ribose 1-phosphate + (2R)-3-phospho-glyceroyl phosphate = 2-deoxy-alpha-D-ribose 1,5-bisphosphate + (2R)-3-phosphoglycerate + H(+). The enzyme catalyses (2R)-3-phospho-glyceroyl phosphate + alpha-D-mannose 1-phosphate = alpha-D-mannose 1,6-bisphosphate + (2R)-3-phosphoglycerate + H(+). Its function is as follows. Glucose 1,6-bisphosphate synthase using 1,3-bisphosphoglycerate as a phosphate donor and a series of 1-phosphate sugars, including glucose 1-phosphate, mannose 1-phosphate, ribose 1-phosphate and deoxyribose 1-phosphate, as acceptors. In vitro, also exhibits very low phosphopentomutase and phosphoglucomutase activity which are most probably not physiologically relevant. The polypeptide is Glucose 1,6-bisphosphate synthase (Homo sapiens (Human)).